The chain runs to 593 residues: Auxin response factor 12 (593 aa).

The segment at residues 126-228 (FTKVLTASDT…ELRVGIRRAR (103 aa)) is a DNA-binding region (TF-B3). Residues 511–592 (RTCTKVQMQG…MVKKIFIQKR (82 aa)) enclose the PB1 domain.

This sequence belongs to the ARF family. In terms of assembly, homodimers and heterodimers.

It localises to the nucleus. Auxin response factors (ARFs) are transcriptional factors that bind specifically to the DNA sequence 5'-TGTCTC-3' found in the auxin-responsive promoter elements (AuxREs). Could act as transcriptional activator or repressor. Formation of heterodimers with Aux/IAA proteins may alter their ability to modulate early auxin response genes expression. This chain is Auxin response factor 12 (ARF12), found in Arabidopsis thaliana (Mouse-ear cress).